Reading from the N-terminus, the 497-residue chain is Probable pyruvate kinase, cytosolic isozyme (497 aa).

Arg37 is a binding site for substrate. Residues Asn39, Ser41, Asp71, and Thr72 each coordinate K(+). 39 to 42 (NFSH) contacts ATP. ATP is bound by residues Arg78 and Lys163. Lys227 is a substrate binding site. Glu229 contributes to the Mg(2+) binding site. Gly252, Asp253, and Thr285 together coordinate substrate. Asp253 contributes to the Mg(2+) binding site.

Belongs to the pyruvate kinase family. In terms of assembly, homotetramer. The cofactor is Mg(2+). It depends on K(+) as a cofactor.

It localises to the cytoplasm. Its subcellular location is the cytosol. It catalyses the reaction pyruvate + ATP = phosphoenolpyruvate + ADP + H(+). Its pathway is carbohydrate degradation; glycolysis; pyruvate from D-glyceraldehyde 3-phosphate: step 5/5. In terms of biological role, key regulatory enzyme of the glycolytic pathway that catalyzes the final step of glycolysis, converting ADP and phosphoenolpyruvate (PEP) to ATP and pyruvate by essentially irreversible transphosphorylation. In Arabidopsis thaliana (Mouse-ear cress), this protein is Probable pyruvate kinase, cytosolic isozyme.